Reading from the N-terminus, the 181-residue chain is Probable pyruvoyl-dependent arginine decarboxylase (181 aa).

A Pyruvic acid (Ser) modification is found at S43.

The protein belongs to the PdaD family. Pyruvate serves as cofactor.

The enzyme catalyses L-arginine + H(+) = agmatine + CO2. The chain is Probable pyruvoyl-dependent arginine decarboxylase from Chlorobium luteolum (strain DSM 273 / BCRC 81028 / 2530) (Pelodictyon luteolum).